A 1390-amino-acid chain; its full sequence is DNA-directed RNA polymerase subunit beta' (1390 aa).

4 residues coordinate Zn(2+): Cys-73, Cys-75, Cys-88, and Cys-91. 3 residues coordinate Mg(2+): Asp-464, Asp-466, and Asp-468. Zn(2+)-binding residues include Cys-810, Cys-884, Cys-891, and Cys-894. The segment at 1365 to 1390 is disordered; that stretch reads EKKEQKIYGNGEEPAKEQKWIPQAGT.

The protein belongs to the RNA polymerase beta' chain family. As to quaternary structure, the RNAP catalytic core consists of 2 alpha, 1 beta, 1 beta' and 1 omega subunit. When a sigma factor is associated with the core the holoenzyme is formed, which can initiate transcription. Requires Mg(2+) as cofactor. Zn(2+) serves as cofactor.

It catalyses the reaction RNA(n) + a ribonucleoside 5'-triphosphate = RNA(n+1) + diphosphate. In terms of biological role, DNA-dependent RNA polymerase catalyzes the transcription of DNA into RNA using the four ribonucleoside triphosphates as substrates. The chain is DNA-directed RNA polymerase subunit beta' from Methylacidiphilum infernorum (isolate V4) (Methylokorus infernorum (strain V4)).